Consider the following 487-residue polypeptide: Iron-sulfur cluster assembly SufBD family protein ycf24 (487 aa).

Belongs to the iron-sulfur cluster assembly SufBD family.

The protein resides in the plastid. Its subcellular location is the chloroplast. This is Iron-sulfur cluster assembly SufBD family protein ycf24 (ycf24) from Porphyra purpurea (Red seaweed).